The primary structure comprises 121 residues: uncharacterized protein (121 aa).

This is an uncharacterized protein from Ictaluridae (bullhead catfishes).